A 598-amino-acid chain; its full sequence is Elongation factor 4 (598 aa).

One can recognise a tr-type G domain in the interval 5-187 (ANIRNFSIIA…ALVEFIPAPT (183 aa)). Residues 17 to 22 (DHGKST) and 134 to 137 (NKID) contribute to the GTP site.

It belongs to the TRAFAC class translation factor GTPase superfamily. Classic translation factor GTPase family. LepA subfamily.

It localises to the cell inner membrane. The enzyme catalyses GTP + H2O = GDP + phosphate + H(+). In terms of biological role, required for accurate and efficient protein synthesis under certain stress conditions. May act as a fidelity factor of the translation reaction, by catalyzing a one-codon backward translocation of tRNAs on improperly translocated ribosomes. Back-translocation proceeds from a post-translocation (POST) complex to a pre-translocation (PRE) complex, thus giving elongation factor G a second chance to translocate the tRNAs correctly. Binds to ribosomes in a GTP-dependent manner. The chain is Elongation factor 4 from Psychrobacter cryohalolentis (strain ATCC BAA-1226 / DSM 17306 / VKM B-2378 / K5).